Here is a 249-residue protein sequence, read N- to C-terminus: uncharacterized protein (249 aa).

An N-terminal signal peptide occupies residues 1–25 (MRYLNTKNIIAAGVLLSCMSSIAWG).

The protein belongs to the periplasmic pilus chaperone family.

It localises to the periplasm. Its function is as follows. Could be required for the biogenesis of a putative fimbria. This is an uncharacterized protein from Escherichia coli (strain K12).